We begin with the raw amino-acid sequence, 421 residues long: Homoserine dehydrogenase (421 aa).

NAD(+) is bound by residues valine 15, alanine 34, and valine 44. Valine 15 is a binding site for NADP(+). Residue valine 15 coordinates NADPH. NADP(+) contacts are provided by arginine 46 and lysine 103. Arginine 46 and lysine 103 together coordinate NADPH. Glutamate 125, valine 128, glycine 130, and isoleucine 132 together coordinate Na(+). NADP(+) contacts are provided by glycine 183 and glutamate 186. L-homoserine-binding residues include glutamate 186 and aspartate 197. Lysine 201 acts as the Proton donor in catalysis. Glycine 298 is a binding site for NAD(+). Glycine 298 is an NADP(+) binding site. Glycine 298 serves as a coordination point for NADPH. The region spanning tyrosine 343–arginine 418 is the ACT domain.

It belongs to the homoserine dehydrogenase family. It depends on a metal cation as a cofactor.

It carries out the reaction L-homoserine + NADP(+) = L-aspartate 4-semialdehyde + NADPH + H(+). It catalyses the reaction L-homoserine + NAD(+) = L-aspartate 4-semialdehyde + NADH + H(+). Its pathway is amino-acid biosynthesis; L-methionine biosynthesis via de novo pathway; L-homoserine from L-aspartate: step 3/3. The protein operates within amino-acid biosynthesis; L-threonine biosynthesis; L-threonine from L-aspartate: step 3/5. Functionally, catalyzes the conversion of L-aspartate-beta-semialdehyde (L-Asa) to L-homoserine (L-Hse), the third step in the biosynthesis of threonine and methionine from aspartate. The protein is Homoserine dehydrogenase (hom) of Helicobacter pylori (strain ATCC 700392 / 26695) (Campylobacter pylori).